A 329-amino-acid polypeptide reads, in one-letter code: Uroporphyrinogen decarboxylase (329 aa).

Residues Arg22–Arg26, Asp71, Tyr140, Ser195, and His307 each bind substrate.

It belongs to the uroporphyrinogen decarboxylase family. As to quaternary structure, homodimer.

The protein resides in the cytoplasm. It catalyses the reaction uroporphyrinogen III + 4 H(+) = coproporphyrinogen III + 4 CO2. It functions in the pathway porphyrin-containing compound metabolism; protoporphyrin-IX biosynthesis; coproporphyrinogen-III from 5-aminolevulinate: step 4/4. Functionally, catalyzes the decarboxylation of four acetate groups of uroporphyrinogen-III to yield coproporphyrinogen-III. The sequence is that of Uroporphyrinogen decarboxylase from Chlamydia pneumoniae (Chlamydophila pneumoniae).